The following is a 404-amino-acid chain: F-box only protein 12 (404 aa).

One can recognise an F-box domain in the interval 1–44 (MKNSIPIDLIYEILSRLPAKSVARCRCVSKRWRSILRHQVFTEL). Residues 383-403 (LAILFCLFFLLFNYLIRLCWV) form a helical membrane-spanning segment.

It localises to the membrane. In Arabidopsis thaliana (Mouse-ear cress), this protein is F-box only protein 12 (FBX12).